Reading from the N-terminus, the 374-residue chain is Chaperone protein DnaJ (374 aa).

The J domain occupies 6-70 (DYYDILGVSK…QKRAQYDQFG (65 aa)). A CR-type zinc finger spans residues 135–217 (GKKTTIKYSR…CGGTGHTSQQ (83 aa)). Positions 148, 151, 165, 168, 191, 194, 205, and 208 each coordinate Zn(2+). CXXCXGXG motif repeat units lie at residues 148–155 (CKTCGGSG), 165–172 (CHKCNGTG), 191–198 (CDVCNGTG), and 205–212 (CPTCGGTG). Disordered regions lie at residues 308 to 328 (GTNFRLKGKGAPRLRGNGTGD) and 347 to 374 (EALKQFAKASGEEPSGHGKSGFFDKFMN).

The protein belongs to the DnaJ family. In terms of assembly, homodimer. The cofactor is Zn(2+).

It localises to the cytoplasm. In terms of biological role, participates actively in the response to hyperosmotic and heat shock by preventing the aggregation of stress-denatured proteins and by disaggregating proteins, also in an autonomous, DnaK-independent fashion. Unfolded proteins bind initially to DnaJ; upon interaction with the DnaJ-bound protein, DnaK hydrolyzes its bound ATP, resulting in the formation of a stable complex. GrpE releases ADP from DnaK; ATP binding to DnaK triggers the release of the substrate protein, thus completing the reaction cycle. Several rounds of ATP-dependent interactions between DnaJ, DnaK and GrpE are required for fully efficient folding. Also involved, together with DnaK and GrpE, in the DNA replication of plasmids through activation of initiation proteins. This Pediococcus pentosaceus (strain ATCC 25745 / CCUG 21536 / LMG 10740 / 183-1w) protein is Chaperone protein DnaJ.